The following is a 304-amino-acid chain: Protein BOBBER 1 (304 aa).

N-acetylalanine is present on Ala-2. Residues 54 to 106 adopt a coiled-coil conformation; that stretch reads EDEIVVAVRAAKEKLKKAEKKKAEKESVKPVEKKAEKEIVKLVEKKVEKESVK. The segment at 111 to 141 is disordered; sequence ASSAEPIEVEKPKEEEEKKESGPIVPNKGNG. The span at 118–131 shows a compositional bias: basic and acidic residues; sequence EVEKPKEEEEKKES. Residues 142–231 enclose the CS domain; it reads TDLENYSWIQ…DQMEWWKCCV (90 aa).

Expressed in all seedling tissues with highest expression levels at the root tip.

It is found in the cytoplasm. Its subcellular location is the cytoplasmic granule. Its function is as follows. Small heat shock protein required for the establishment of auxin gradients and for patterning of the apical domain of the embryo. Involved in the specification of the cotyledon primordia. Also required for normal inflorescence and floral meristem function, normal developmental patterning and thermotolerance. Acts as a molecular chaperone. This chain is Protein BOBBER 1 (BOB1), found in Arabidopsis thaliana (Mouse-ear cress).